Consider the following 48-residue polypeptide: Large ribosomal subunit protein bL33B (48 aa).

It belongs to the bacterial ribosomal protein bL33 family.

This chain is Large ribosomal subunit protein bL33B (rpmG2), found in Mycoplasma genitalium (strain ATCC 33530 / DSM 19775 / NCTC 10195 / G37) (Mycoplasmoides genitalium).